We begin with the raw amino-acid sequence, 200 residues long: Small ribosomal subunit protein uS4 (200 aa).

The interval 22 to 42 is disordered; sequence TGKELEKRPYAPGPHGPGQRK. Positions 92 to 155 constitute an S4 RNA-binding domain; it reads TRLDNLVYRL…QNLAVVKESV (64 aa).

Belongs to the universal ribosomal protein uS4 family. As to quaternary structure, part of the 30S ribosomal subunit. Contacts protein S5. The interaction surface between S4 and S5 is involved in control of translational fidelity.

Functionally, one of the primary rRNA binding proteins, it binds directly to 16S rRNA where it nucleates assembly of the body of the 30S subunit. In terms of biological role, with S5 and S12 plays an important role in translational accuracy. This Bacillus pumilus (strain SAFR-032) protein is Small ribosomal subunit protein uS4.